The sequence spans 117 residues: UPF0127 protein PYRAB11210 (117 aa).

Belongs to the UPF0127 family.

In Pyrococcus abyssi (strain GE5 / Orsay), this protein is UPF0127 protein PYRAB11210.